The chain runs to 122 residues: Basic phospholipase A2 PL-X (122 aa).

Cystine bridges form between cysteine 26/cysteine 115, cysteine 28/cysteine 44, cysteine 43/cysteine 95, cysteine 49/cysteine 122, cysteine 50/cysteine 88, cysteine 57/cysteine 81, and cysteine 75/cysteine 86. 3 residues coordinate Ca(2+): tyrosine 27, glycine 29, and glycine 31. Histidine 47 is an active-site residue. Aspartate 48 is a Ca(2+) binding site. Aspartate 89 is a catalytic residue.

The protein belongs to the phospholipase A2 family. Group II subfamily. D49 sub-subfamily. Ca(2+) is required as a cofactor. As to expression, expressed by the venom gland.

It localises to the secreted. The catalysed reaction is a 1,2-diacyl-sn-glycero-3-phosphocholine + H2O = a 1-acyl-sn-glycero-3-phosphocholine + a fatty acid + H(+). Functionally, PLA2 catalyzes the calcium-dependent hydrolysis of the 2-acyl groups in 3-sn-phosphoglycerides. The protein is Basic phospholipase A2 PL-X of Protobothrops flavoviridis (Habu).